Consider the following 131-residue polypeptide: Large-conductance mechanosensitive channel (131 aa).

3 helical membrane passes run 8–28 (FALK…GAFG), 30–50 (IVTS…VGGI), and 72–92 (GQFI…FMFI).

Belongs to the MscL family. Homopentamer.

It is found in the cell membrane. In terms of biological role, channel that opens in response to stretch forces in the membrane lipid bilayer. May participate in the regulation of osmotic pressure changes within the cell. The protein is Large-conductance mechanosensitive channel of Alkaliphilus oremlandii (strain OhILAs) (Clostridium oremlandii (strain OhILAs)).